The following is a 604-amino-acid chain: Glutamine--fructose-6-phosphate aminotransferase [isomerizing] (604 aa).

Cys2 functions as the Nucleophile; for GATase activity in the catalytic mechanism. Residues 2–218 (CGIVGVVGNR…DKELVVLTKD (217 aa)) form the Glutamine amidotransferase type-2 domain. 2 consecutive SIS domains span residues 284–423 (IVKS…ANGK) and 456–594 (VANL…VDKP). The active-site For Fru-6P isomerization activity is Lys599.

In terms of assembly, homodimer.

It localises to the cytoplasm. It catalyses the reaction D-fructose 6-phosphate + L-glutamine = D-glucosamine 6-phosphate + L-glutamate. Catalyzes the first step in hexosamine metabolism, converting fructose-6P into glucosamine-6P using glutamine as a nitrogen source. This chain is Glutamine--fructose-6-phosphate aminotransferase [isomerizing], found in Streptococcus mutans serotype c (strain ATCC 700610 / UA159).